The chain runs to 314 residues: MKIVLANPRGFCAGVDRAISIVERALELYEAPIYVRHEVVHNRFVVEGLKQRGAIFVEELHEVPDDNIVIFSAHGVSQAVRKEAKERALTVFDATCPLVTKVHMEVARASKKNIEVVLIGHAGHPEVEGTMGQYASDSAGMYLVETPDDVIKLNVKDPSNLHYVSQTTLSVDETADVIDELRRVFPDIQGPRKDDICYATQNRQDAVRDMASQVDVMIVVGSKNSSNSNRLRELSEKLGTTSYLIDCPEDLKEEWLTDQAKVGVTAGASAPEELVNQIIEQVKAFGGTAVEELTGREENMFFEVPKELQIKTVS.

Cys12 is a binding site for [4Fe-4S] cluster. (2E)-4-hydroxy-3-methylbut-2-enyl diphosphate contacts are provided by His41 and His74. Dimethylallyl diphosphate-binding residues include His41 and His74. 2 residues coordinate isopentenyl diphosphate: His41 and His74. Cys96 is a [4Fe-4S] cluster binding site. His124 provides a ligand contact to (2E)-4-hydroxy-3-methylbut-2-enyl diphosphate. Residue His124 participates in dimethylallyl diphosphate binding. His124 provides a ligand contact to isopentenyl diphosphate. The active-site Proton donor is the Glu126. Thr167 serves as a coordination point for (2E)-4-hydroxy-3-methylbut-2-enyl diphosphate. Cys197 is a [4Fe-4S] cluster binding site. (2E)-4-hydroxy-3-methylbut-2-enyl diphosphate contacts are provided by Ser225, Ser226, Asn227, and Ser269. Ser225, Ser226, Asn227, and Ser269 together coordinate dimethylallyl diphosphate. The isopentenyl diphosphate site is built by Ser225, Ser226, Asn227, and Ser269.

It belongs to the IspH family. Requires [4Fe-4S] cluster as cofactor.

The catalysed reaction is isopentenyl diphosphate + 2 oxidized [2Fe-2S]-[ferredoxin] + H2O = (2E)-4-hydroxy-3-methylbut-2-enyl diphosphate + 2 reduced [2Fe-2S]-[ferredoxin] + 2 H(+). The enzyme catalyses dimethylallyl diphosphate + 2 oxidized [2Fe-2S]-[ferredoxin] + H2O = (2E)-4-hydroxy-3-methylbut-2-enyl diphosphate + 2 reduced [2Fe-2S]-[ferredoxin] + 2 H(+). The protein operates within isoprenoid biosynthesis; dimethylallyl diphosphate biosynthesis; dimethylallyl diphosphate from (2E)-4-hydroxy-3-methylbutenyl diphosphate: step 1/1. Its pathway is isoprenoid biosynthesis; isopentenyl diphosphate biosynthesis via DXP pathway; isopentenyl diphosphate from 1-deoxy-D-xylulose 5-phosphate: step 6/6. In terms of biological role, catalyzes the conversion of 1-hydroxy-2-methyl-2-(E)-butenyl 4-diphosphate (HMBPP) into a mixture of isopentenyl diphosphate (IPP) and dimethylallyl diphosphate (DMAPP). Acts in the terminal step of the DOXP/MEP pathway for isoprenoid precursor biosynthesis. The sequence is that of 4-hydroxy-3-methylbut-2-enyl diphosphate reductase from Aliivibrio fischeri (strain MJ11) (Vibrio fischeri).